A 500-amino-acid polypeptide reads, in one-letter code: 2-isopropylmalate synthase (500 aa).

In terms of domain architecture, Pyruvate carboxyltransferase spans 5 to 266; sequence LFIFDTTLRD…ITNITTNKIY (262 aa). Residues Asp-14, His-202, His-204, and Asn-238 each contribute to the Mn(2+) site. The interval 389–500 is regulatory domain; it reads KLEYLQVTSG…VDAINKFIVD (112 aa).

This sequence belongs to the alpha-IPM synthase/homocitrate synthase family. LeuA type 1 subfamily. As to quaternary structure, homodimer. Requires Mn(2+) as cofactor.

It localises to the cytoplasm. It catalyses the reaction 3-methyl-2-oxobutanoate + acetyl-CoA + H2O = (2S)-2-isopropylmalate + CoA + H(+). It participates in amino-acid biosynthesis; L-leucine biosynthesis; L-leucine from 3-methyl-2-oxobutanoate: step 1/4. Functionally, catalyzes the condensation of the acetyl group of acetyl-CoA with 3-methyl-2-oxobutanoate (2-ketoisovalerate) to form 3-carboxy-3-hydroxy-4-methylpentanoate (2-isopropylmalate). This is 2-isopropylmalate synthase from Parabacteroides distasonis (strain ATCC 8503 / DSM 20701 / CIP 104284 / JCM 5825 / NCTC 11152).